A 263-amino-acid polypeptide reads, in one-letter code: 3-methyl-2-oxobutanoate hydroxymethyltransferase (263 aa).

Asp45 and Asp84 together coordinate Mg(2+). 3-methyl-2-oxobutanoate contacts are provided by residues 45 to 46 (DS), Asp84, and Lys112. Residue Glu114 participates in Mg(2+) binding. Glu180 (proton acceptor) is an active-site residue.

The protein belongs to the PanB family. In terms of assembly, homodecamer; pentamer of dimers. It depends on Mg(2+) as a cofactor.

It localises to the cytoplasm. The enzyme catalyses 3-methyl-2-oxobutanoate + (6R)-5,10-methylene-5,6,7,8-tetrahydrofolate + H2O = 2-dehydropantoate + (6S)-5,6,7,8-tetrahydrofolate. It functions in the pathway cofactor biosynthesis; (R)-pantothenate biosynthesis; (R)-pantoate from 3-methyl-2-oxobutanoate: step 1/2. Its function is as follows. Catalyzes the reversible reaction in which hydroxymethyl group from 5,10-methylenetetrahydrofolate is transferred onto alpha-ketoisovalerate to form ketopantoate. This is 3-methyl-2-oxobutanoate hydroxymethyltransferase from Salmonella enteritidis PT4 (strain P125109).